A 278-amino-acid chain; its full sequence is Octanoyl-[GcvH]:protein N-octanoyltransferase (278 aa).

The region spanning 44 to 249 (SQSPPTLRAW…TLQQHGASLL (206 aa)) is the BPL/LPL catalytic domain. Residue Cys-148 is the Acyl-thioester intermediate of the active site.

It belongs to the octanoyltransferase LipL family.

It catalyses the reaction N(6)-octanoyl-L-lysyl-[glycine-cleavage complex H protein] + L-lysyl-[lipoyl-carrier protein] = N(6)-octanoyl-L-lysyl-[lipoyl-carrier protein] + L-lysyl-[glycine-cleavage complex H protein]. It functions in the pathway protein modification; protein lipoylation via endogenous pathway; protein N(6)-(lipoyl)lysine from octanoyl-[acyl-carrier-protein]. Catalyzes the amidotransfer (transamidation) of the octanoyl moiety from octanoyl-GcvH to the lipoyl domain of the E2 subunit of lipoate-dependent enzymes. In Halalkalibacterium halodurans (strain ATCC BAA-125 / DSM 18197 / FERM 7344 / JCM 9153 / C-125) (Bacillus halodurans), this protein is Octanoyl-[GcvH]:protein N-octanoyltransferase.